The chain runs to 274 residues: MQFSKMHGLGNDFMVVDAVTQNVFFSPELIRRLADRHLGVGFDQLLVIEPPYDPELDFHYRIFNADGSEVAQCGNGARCFARFVRLKGLTNKRDIRVSTANGRMVLTVTDDDLVRVNMGEPNFEPSAVPFRANKAEKTYIMRAAEQTILCGVVSIGNPHCVIQVDDVDTAAVETLGPVLESHERFPERANIGFMQVVKREHIRLRVYERGAGETQACGSGACAAVAVGIQQGLLAEEVRVELPGGRLDIAWKGPGHPLYMTGPAVHVYDGFIHL.

Substrate-binding residues include Asn-11, Gln-44, and Asn-64. The Proton donor role is filled by Cys-73. Residues 74–75 (GN), Asn-157, Asn-190, and 208–209 (ER) each bind substrate. Cys-217 acts as the Proton acceptor in catalysis. Substrate is bound at residue 218–219 (GS).

This sequence belongs to the diaminopimelate epimerase family. In terms of assembly, homodimer.

Its subcellular location is the cytoplasm. The enzyme catalyses (2S,6S)-2,6-diaminopimelate = meso-2,6-diaminopimelate. The protein operates within amino-acid biosynthesis; L-lysine biosynthesis via DAP pathway; DL-2,6-diaminopimelate from LL-2,6-diaminopimelate: step 1/1. Functionally, catalyzes the stereoinversion of LL-2,6-diaminopimelate (L,L-DAP) to meso-diaminopimelate (meso-DAP), a precursor of L-lysine and an essential component of the bacterial peptidoglycan. This Shigella boydii serotype 18 (strain CDC 3083-94 / BS512) protein is Diaminopimelate epimerase.